The following is a 193-amino-acid chain: Large ribosomal subunit protein uL5 (193 aa).

It belongs to the universal ribosomal protein uL5 family. In terms of assembly, part of the 50S ribosomal subunit; part of the 5S rRNA/L5/L18/L25 subcomplex. Contacts the 5S rRNA and the P site tRNA. Forms a bridge to the 30S subunit in the 70S ribosome.

Functionally, this is one of the proteins that bind and probably mediate the attachment of the 5S RNA into the large ribosomal subunit, where it forms part of the central protuberance. In the 70S ribosome it contacts protein S13 of the 30S subunit (bridge B1b), connecting the 2 subunits; this bridge is implicated in subunit movement. Contacts the P site tRNA; the 5S rRNA and some of its associated proteins might help stabilize positioning of ribosome-bound tRNAs. This chain is Large ribosomal subunit protein uL5, found in Renibacterium salmoninarum (strain ATCC 33209 / DSM 20767 / JCM 11484 / NBRC 15589 / NCIMB 2235).